The sequence spans 600 residues: NADH-quinone oxidoreductase subunit C/D (600 aa).

Residues 1 to 190 form an NADH dehydrogenase I subunit C region; sequence MIDLMPKKNT…EPFFLNEQKE (190 aa). The interval 214-600 is NADH dehydrogenase I subunit D; that stretch reads EFMFLNLGPN…IDFVMSDVDR (387 aa).

The protein in the N-terminal section; belongs to the complex I 30 kDa subunit family. In the C-terminal section; belongs to the complex I 49 kDa subunit family. NDH-1 is composed of 13 different subunits. Subunits NuoB, CD, E, F, and G constitute the peripheral sector of the complex.

The protein resides in the cell membrane. It catalyses the reaction a quinone + NADH + 5 H(+)(in) = a quinol + NAD(+) + 4 H(+)(out). Functionally, NDH-1 shuttles electrons from NADH, via FMN and iron-sulfur (Fe-S) centers, to quinones in the respiratory chain. The immediate electron acceptor for the enzyme in this species is believed to be ubiquinone. Couples the redox reaction to proton translocation (for every two electrons transferred, four hydrogen ions are translocated across the cytoplasmic membrane), and thus conserves the redox energy in a proton gradient. The sequence is that of NADH-quinone oxidoreductase subunit C/D from Buchnera aphidicola subsp. Acyrthosiphon pisum (strain Tuc7).